The chain runs to 216 residues: Probable RNA 2'-phosphotransferase 1 (216 aa).

Belongs to the KptA/TPT1 family.

Its function is as follows. Removes the 2'-phosphate from RNA via an intermediate in which the phosphate is ADP-ribosylated by NAD followed by a presumed transesterification to release the RNA and generate ADP-ribose 1''-2''-cyclic phosphate (APPR&gt;P). May function as an ADP-ribosylase. This Archaeoglobus fulgidus (strain ATCC 49558 / DSM 4304 / JCM 9628 / NBRC 100126 / VC-16) protein is Probable RNA 2'-phosphotransferase 1 (kptA1).